Here is a 46-residue protein sequence, read N- to C-terminus: Gene 1.1 protein (46 aa).

Over residues 1-14 the composition is skewed to basic and acidic residues; the sequence is MRTNFEKFTKRDSV. The tract at residues 1–46 is disordered; sequence MRTNFEKFTKRDSVVNEQGEQWQERRDRMKKRHKQQRGNSQKREWN.

Functionally, the function of this early gene protein is unknown. The protein is Gene 1.1 protein (1.1) of Escherichia coli (Bacteriophage T3).